We begin with the raw amino-acid sequence, 504 residues long: GTPase Der (504 aa).

An EngA-type G 1 domain is found at 4 to 168 (PVVALVGRPN…QVLAPFAEKM (165 aa)). Residues 10–17 (GRPNVGKS), 57–61 (DTGGI), and 120–123 (NKTD) each bind GTP. A compositionally biased stretch (basic and acidic residues) spans 168-179 (MENADENDRTSE). A disordered region spans residues 168–191 (MENADENDRTSEEEQDEWEQEFDF). Residues 180–191 (EEQDEWEQEFDF) are compositionally biased toward acidic residues. The 174-residue stretch at 216–389 (IKIAIVGRPN…SIKEAYACAT (174 aa)) folds into the EngA-type G 2 domain. Residues 222–229 (GRPNVGKS), 269–273 (DTAGV), and 334–337 (NKWD) contribute to the GTP site. The KH-like domain occupies 390–474 (QKMTTSLLTR…PIRLLFQEGS (85 aa)).

It belongs to the TRAFAC class TrmE-Era-EngA-EngB-Septin-like GTPase superfamily. EngA (Der) GTPase family. In terms of assembly, associates with the 50S ribosomal subunit.

Its function is as follows. GTPase that plays an essential role in the late steps of ribosome biogenesis. This chain is GTPase Der, found in Haemophilus influenzae (strain ATCC 51907 / DSM 11121 / KW20 / Rd).